Consider the following 55-residue polypeptide: Large ribosomal subunit protein bL33 (55 aa).

This sequence belongs to the bacterial ribosomal protein bL33 family.

This Vibrio cholerae serotype O1 (strain ATCC 39541 / Classical Ogawa 395 / O395) protein is Large ribosomal subunit protein bL33.